Reading from the N-terminus, the 151-residue chain is MDNKDYKKFYLIREDVLPESVVKTLKIKDALKSDPTLSIYDAVKQFDLSRSAFYKYRETIFPVDDKMLDHREFTLILYVTDIVGMLARVLDVISKLELSVLTIHQSIPMEEKATITLSLNAKSKETSVEDVIGALRNLDYVSKVELISMSM.

The ACT domain occupies 74 to 149 (TLILYVTDIV…YVSKVELISM (76 aa)).

It belongs to the UPF0735 family.

The sequence is that of UPF0735 ACT domain-containing protein SAUSA300_1599 from Staphylococcus aureus (strain USA300).